The sequence spans 216 residues: Hexitol phosphatase A (216 aa).

Asp9 acts as the Nucleophile in catalysis. A divalent metal cation is bound by residues Asp9 and Asp11. Residues 9-11 (DLD), 106-107 (TS), and Lys138 each bind substrate. Asp11 functions as the Proton donor in the catalytic mechanism. Residue Asp163 coordinates a divalent metal cation.

Belongs to the HAD-like hydrolase superfamily. CbbY/CbbZ/Gph/YieH family. The cofactor is Mg(2+). Mn(2+) serves as cofactor. Requires Co(2+) as cofactor.

It catalyses the reaction sugar phosphate + H2O = sugar + phosphate.. It carries out the reaction D-mannitol 1-phosphate + H2O = D-mannitol + phosphate. The catalysed reaction is D-sorbitol 6-phosphate + H2O = D-sorbitol + phosphate. Functionally, sugar-phosphate phosphohydrolase that appears to contribute to butanol tolerance. Catalyzes the dephosphorylation of D-mannitol 1-phosphate and D-sorbitol 6-phosphate. Is also able to dephosphorylate other sugar phosphates in vitro including ribose-5-phosphate (Rib5P), 2-deoxyribose-5-phosphate, fructose-1-phosphate (Fru1P), fructose-6-phosphate (Fru6P), and glucose-6-phosphate (Glu6P). Selectively hydrolyzes beta-D-glucose-1-phosphate (bGlu1P) and has no activity with the alpha form. This is Hexitol phosphatase A from Escherichia coli (strain K12).